Reading from the N-terminus, the 962-residue chain is Oncostatin-M-specific receptor subunit beta (962 aa).

Positions 1 to 28 (MAFSVVLHQVTFLLAVLSLRTSQSKVLG) are cleaved as a signal peptide. At 29–738 (EPLQLTPEIH…VTTPDVRSHM (710 aa)) the chain is on the extracellular side. N-linked (GlcNAc...) asparagine glycosylation is present at Asn-219. 5 Fibronectin type-III domains span residues 237–332 (EPKN…VHPK), 333–426 (APHD…TPEA), 428–527 (PSEA…SGHE), 528–621 (EVHE…TQEL), and 623–734 (PSVN…TPDV). Cys-243 and Cys-253 are joined by a disulfide. N-linked (GlcNAc...) asparagine glycosylation occurs at Asn-324. The short motif at 413-417 (WSDWM) is the WSXWS motif element. Residues Asn-492, Asn-578, and Asn-723 are each glycosylated (N-linked (GlcNAc...) asparagine). Residues 739 to 759 (LLQIILPMTLGVFLSIIVCYW) traverse the membrane as a helical segment. Over 760–962 (KSQWVKEKCY…ASLKENNLTS (203 aa)) the chain is Cytoplasmic. Positions 768-776 (CYPDIPNPY) match the Box 1 motif motif. Residues 818-840 (VGSGKLHTEDVPTKPPLVPTEKD) are disordered.

The protein belongs to the type I cytokine receptor family. Type 2 subfamily. In terms of assembly, heterodimer composed of OSMR and IL6ST (type II OSM receptor). Heterodimer with IL31RA to form the IL31 receptor. In terms of tissue distribution, widely expressed. Expressed at high levels in the liver, skin and spleen. In the liver it is expressed exclusively in the oval cells.

Its subcellular location is the membrane. In terms of biological role, associates with IL31RA to form the IL31 receptor. Binds IL31 and activates STAT1, STAT3 and STAT5. Capable of transducing OSM-specific signaling events. The OSM/OSM-R system is pivotal in the differentiation of oval cells into hepatocytes, thereby promoting liver regeneration. The sequence is that of Oncostatin-M-specific receptor subunit beta (Osmr) from Rattus norvegicus (Rat).